A 205-amino-acid chain; its full sequence is Thiamine-phosphate synthase (205 aa).

Residues 34–38 and Asn-66 contribute to the 4-amino-2-methyl-5-(diphosphooxymethyl)pyrimidine site; that span reads QLRCK. Mg(2+) contacts are provided by Asp-67 and Asp-86. Residue Ser-105 coordinates 4-amino-2-methyl-5-(diphosphooxymethyl)pyrimidine. 131–133 provides a ligand contact to 2-[(2R,5Z)-2-carboxy-4-methylthiazol-5(2H)-ylidene]ethyl phosphate; sequence TTT. A 4-amino-2-methyl-5-(diphosphooxymethyl)pyrimidine-binding site is contributed by Lys-134. 2-[(2R,5Z)-2-carboxy-4-methylthiazol-5(2H)-ylidene]ethyl phosphate is bound at residue Gly-163.

The protein belongs to the thiamine-phosphate synthase family. It depends on Mg(2+) as a cofactor.

The enzyme catalyses 2-[(2R,5Z)-2-carboxy-4-methylthiazol-5(2H)-ylidene]ethyl phosphate + 4-amino-2-methyl-5-(diphosphooxymethyl)pyrimidine + 2 H(+) = thiamine phosphate + CO2 + diphosphate. It catalyses the reaction 2-(2-carboxy-4-methylthiazol-5-yl)ethyl phosphate + 4-amino-2-methyl-5-(diphosphooxymethyl)pyrimidine + 2 H(+) = thiamine phosphate + CO2 + diphosphate. It carries out the reaction 4-methyl-5-(2-phosphooxyethyl)-thiazole + 4-amino-2-methyl-5-(diphosphooxymethyl)pyrimidine + H(+) = thiamine phosphate + diphosphate. Its pathway is cofactor biosynthesis; thiamine diphosphate biosynthesis; thiamine phosphate from 4-amino-2-methyl-5-diphosphomethylpyrimidine and 4-methyl-5-(2-phosphoethyl)-thiazole: step 1/1. Functionally, condenses 4-methyl-5-(beta-hydroxyethyl)thiazole monophosphate (THZ-P) and 2-methyl-4-amino-5-hydroxymethyl pyrimidine pyrophosphate (HMP-PP) to form thiamine monophosphate (TMP). In Neisseria meningitidis serogroup B (strain ATCC BAA-335 / MC58), this protein is Thiamine-phosphate synthase.